The following is a 119-amino-acid chain: Holo-[acyl-carrier-protein] synthase (119 aa).

Residues aspartate 8 and glutamate 60 each coordinate Mg(2+).

The protein belongs to the P-Pant transferase superfamily. AcpS family. It depends on Mg(2+) as a cofactor.

Its subcellular location is the cytoplasm. It catalyses the reaction apo-[ACP] + CoA = holo-[ACP] + adenosine 3',5'-bisphosphate + H(+). Functionally, transfers the 4'-phosphopantetheine moiety from coenzyme A to a Ser of acyl-carrier-protein. The polypeptide is Holo-[acyl-carrier-protein] synthase (Staphylococcus haemolyticus (strain JCSC1435)).